The following is a 1077-amino-acid chain: ATP-dependent helicase HRQ1 (1077 aa).

The Helicase ATP-binding domain maps to 299-483; it reads INSLHQGENV…DMFGINEVTL (185 aa). 312–319 contributes to the ATP binding site; that stretch reads TSTSSGKS. Residues 423-426 carry the DEAH box motif; sequence DELH. A Helicase C-terminal domain is found at 521–678; it reads ILVQLILNNV…DLVLDFNNIL (158 aa).

Belongs to the helicase family. HRQ1 subfamily. As to quaternary structure, forms heptamer rings. Interacts with RAD4. It depends on Mg(2+) as a cofactor.

It localises to the nucleus. The enzyme catalyses Couples ATP hydrolysis with the unwinding of duplex DNA by translocating in the 3'-5' direction.. It carries out the reaction ATP + H2O = ADP + phosphate + H(+). Its function is as follows. Helicase with 3'-5' helicase activity involved in genome stability. Functions in the RAD4-dependent nucleotide excision repair (NER) pathway and plays a critical role in DNA interstrand cross-link repair. Unwinds relatively long duplex DNA up to 120-bp and requires a long 3'-tail of at least 70 nucleotides for efficient unwinding of duplex DNA. Activity is significantly stimulated by a preexisting fork structure. Shows both processive helicase and DNA strand annealing activities. Affects telomere length by a non-catalytic mechanism, probably through inhibiting telomerase by competing with it for ssDNA binding. The chain is ATP-dependent helicase HRQ1 from Saccharomyces cerevisiae (strain ATCC 204508 / S288c) (Baker's yeast).